Reading from the N-terminus, the 718-residue chain is Glycine--tRNA ligase beta subunit (718 aa).

Belongs to the class-II aminoacyl-tRNA synthetase family. Tetramer of two alpha and two beta subunits.

It localises to the cytoplasm. It catalyses the reaction tRNA(Gly) + glycine + ATP = glycyl-tRNA(Gly) + AMP + diphosphate. This Mesorhizobium japonicum (strain LMG 29417 / CECT 9101 / MAFF 303099) (Mesorhizobium loti (strain MAFF 303099)) protein is Glycine--tRNA ligase beta subunit.